Here is a 460-residue protein sequence, read N- to C-terminus: Phosphoenolpyruvate carboxylase (460 aa).

It belongs to the PEPCase type 2 family. Homotetramer. Mg(2+) serves as cofactor.

The catalysed reaction is oxaloacetate + phosphate = phosphoenolpyruvate + hydrogencarbonate. Its function is as follows. Catalyzes the irreversible beta-carboxylation of phosphoenolpyruvate (PEP) to form oxaloacetate (OAA), a four-carbon dicarboxylic acid source for the tricarboxylic acid cycle. The sequence is that of Phosphoenolpyruvate carboxylase from Pyrobaculum aerophilum (strain ATCC 51768 / DSM 7523 / JCM 9630 / CIP 104966 / NBRC 100827 / IM2).